The primary structure comprises 258 residues: UPF0246 protein YaaA (258 aa).

The protein belongs to the UPF0246 family.

This Escherichia coli O157:H7 (strain EC4115 / EHEC) protein is UPF0246 protein YaaA.